Here is a 172-residue protein sequence, read N- to C-terminus: 3-hydroxydecanoyl-[acyl-carrier-protein] dehydratase (172 aa).

Residue His-71 is part of the active site.

It belongs to the thioester dehydratase family. FabA subfamily. Homodimer.

Its subcellular location is the cytoplasm. The enzyme catalyses a (3R)-hydroxyacyl-[ACP] = a (2E)-enoyl-[ACP] + H2O. The catalysed reaction is (3R)-hydroxydecanoyl-[ACP] = (2E)-decenoyl-[ACP] + H2O. It catalyses the reaction (2E)-decenoyl-[ACP] = (3Z)-decenoyl-[ACP]. It functions in the pathway lipid metabolism; fatty acid biosynthesis. Necessary for the introduction of cis unsaturation into fatty acids. Catalyzes the dehydration of (3R)-3-hydroxydecanoyl-ACP to E-(2)-decenoyl-ACP and then its isomerization to Z-(3)-decenoyl-ACP. Can catalyze the dehydratase reaction for beta-hydroxyacyl-ACPs with saturated chain lengths up to 16:0, being most active on intermediate chain length. The protein is 3-hydroxydecanoyl-[acyl-carrier-protein] dehydratase of Proteus mirabilis (strain HI4320).